Reading from the N-terminus, the 701-residue chain is Protein SOSEKI 1 (701 aa).

Residues 8-101 (LSAQVLYQLS…YVLRASELID (94 aa)) are DIX-like oligomerization domain. 4 disordered regions span residues 238–262 (STVHGVHTPPSPSLKSSTELPFSPG), 300–329 (LPPNTHSTHEDNSFWRDSRSKSPSPSSLNE), 366–389 (PYNTCEGASTKIPESKHNSPYRTK), and 538–575 (IASSKPLPPGFHKGTNDTKPVQITPRRTPRNSIPLASP). A compositionally biased stretch (basic and acidic residues) spans 306–319 (STHEDNSFWRDSRS). The C2HC/C3H-type zinc-finger motif lies at 658–687 (ILQECSICRRTFKPDSLQVHMRGCHPPQYA). Zn(2+)-binding residues include Cys662, Cys665, His677, and Cys681.

It belongs to the SOSEKI family. As to quaternary structure, homodimer. Forms long polymer filaments with other SOKs proteins polymers crucial for polar localization and biological activity. Zn(2+) is required as a cofactor.

It localises to the cell membrane. SOSEKI proteins locally interpret global polarity cues and can influence cell division orientation to coordinate cell polarization relative to body axes. The protein is Protein SOSEKI 1 of Physcomitrium patens (Spreading-leaved earth moss).